Here is a 100-residue protein sequence, read N- to C-terminus: Nucleoid-associated protein HPSH_00175 (100 aa).

Belongs to the YbaB/EbfC family. As to quaternary structure, homodimer.

The protein resides in the cytoplasm. It localises to the nucleoid. In terms of biological role, binds to DNA and alters its conformation. May be involved in regulation of gene expression, nucleoid organization and DNA protection. The polypeptide is Nucleoid-associated protein HPSH_00175 (Helicobacter pylori (strain Shi470)).